Consider the following 660-residue polypeptide: Interferon-induced GTP-binding protein Mx1 (660 aa).

The residue at position 1 (Met-1) is an N-acetylmethionine. Basic and acidic residues predominate over residues 1–10 (MVHSEAKMTR). The interval 1–29 (MVHSEAKMTRPDSASASKQQLLNGNADIQ) is disordered. The span at 12-29 (DSASASKQQLLNGNADIQ) shows a compositional bias: polar residues. A Dynamin-type G domain is found at 67-340 (DLALPAIAVI…LITHISKSLP (274 aa)). The tract at residues 77 to 84 (GDQSSGKS) is G1 motif. 77–84 (GDQSSGKS) lines the GTP pocket. A G2 motif region spans residues 102 to 104 (VTR). A G3 motif region spans residues 178–181 (DLPG). GTP-binding positions include 178 to 182 (DLPGI) and 247 to 250 (TKPD). The segment at 247–250 (TKPD) is G4 motif. Positions 279 to 282 (KCRG) are G5 motif. The bundle signaling element (BSE) stretch occupies residues 341–366 (LLENQIKESYQNLSDELQKYGTDIPE). The middle domain stretch occupies residues 366–533 (EDETEKTFFL…HFQMEKIVYC (168 aa)). A stalk region spans residues 367–630 (DETEKTFFLI…RDTYDWLLKE (264 aa)). A critical for lipid-binding region spans residues 554–557 (KKKK). The GED domain maps to 572–660 (MAEILEHLNA…ARRRLAKFPG (89 aa)).

This sequence belongs to the TRAFAC class dynamin-like GTPase superfamily. Dynamin/Fzo/YdjA family. In terms of assembly, homooligomer. Oligomerizes into multimeric filamentous or ring-like structures by virtue of its stalk domain. Oligomerization is critical for GTPase activity, protein stability, and recognition of viral target structures. Interacts with TRPC1, TRPC3, TRPC4, TRPC5, TRPC6 and TRPC7. Interacts with HSPA5. Interacts with TUBB/TUBB5. Interacts with DDX39A and DDX39B. ISGylated.

The protein resides in the cytoplasm. Its subcellular location is the endoplasmic reticulum membrane. It localises to the perinuclear region. Interferon-induced dynamin-like GTPase with antiviral activity. This chain is Interferon-induced GTP-binding protein Mx1 (MX1), found in Equus caballus (Horse).